Consider the following 442-residue polypeptide: Histidinol dehydrogenase (442 aa).

The NAD(+) site is built by Tyr-132, Gln-194, and Asn-217. 3 residues coordinate substrate: Ser-243, Gln-265, and His-268. Zn(2+) is bound by residues Gln-265 and His-268. Active-site proton acceptor residues include Glu-332 and His-333. Substrate contacts are provided by His-333, Asp-366, Glu-420, and His-425. Residue Asp-366 coordinates Zn(2+). Zn(2+) is bound at residue His-425.

It belongs to the histidinol dehydrogenase family. The cofactor is Zn(2+).

It carries out the reaction L-histidinol + 2 NAD(+) + H2O = L-histidine + 2 NADH + 3 H(+). It functions in the pathway amino-acid biosynthesis; L-histidine biosynthesis; L-histidine from 5-phospho-alpha-D-ribose 1-diphosphate: step 9/9. In terms of biological role, catalyzes the sequential NAD-dependent oxidations of L-histidinol to L-histidinaldehyde and then to L-histidine. The protein is Histidinol dehydrogenase of Idiomarina loihiensis (strain ATCC BAA-735 / DSM 15497 / L2-TR).